We begin with the raw amino-acid sequence, 255 residues long: Imidazole glycerol phosphate synthase subunit HisF (255 aa).

Active-site residues include Asp12 and Asp131.

This sequence belongs to the HisA/HisF family. Heterodimer of HisH and HisF.

The protein resides in the cytoplasm. It carries out the reaction 5-[(5-phospho-1-deoxy-D-ribulos-1-ylimino)methylamino]-1-(5-phospho-beta-D-ribosyl)imidazole-4-carboxamide + L-glutamine = D-erythro-1-(imidazol-4-yl)glycerol 3-phosphate + 5-amino-1-(5-phospho-beta-D-ribosyl)imidazole-4-carboxamide + L-glutamate + H(+). Its pathway is amino-acid biosynthesis; L-histidine biosynthesis; L-histidine from 5-phospho-alpha-D-ribose 1-diphosphate: step 5/9. IGPS catalyzes the conversion of PRFAR and glutamine to IGP, AICAR and glutamate. The HisF subunit catalyzes the cyclization activity that produces IGP and AICAR from PRFAR using the ammonia provided by the HisH subunit. The chain is Imidazole glycerol phosphate synthase subunit HisF from Zymomonas mobilis subsp. mobilis (strain ATCC 31821 / ZM4 / CP4).